The sequence spans 49 residues: Astexin-2 (49 aa).

Residues 1–25 (MTKRTTIAARRVGLIDLGKATRQTK) constitute a propeptide that is removed on maturation. Residues 26–34 (GLTQIQALD) constitute a cross-link (isoaspartyl glycine isopeptide (Gly-Asp)).

In terms of processing, this lasso peptide is hydrolyzed to a linear form by the isopeptidase AtxE2, in vitro. The isopeptidase AtxE2 only recognizes the threaded form (but not the unthreaded form).

Its subcellular location is the cytoplasm. The protein resides in the secreted. Shows weak antimicrobial activity against its phylogenetic relative Caulobacter crescentus. Does not show activity against other bacteria tested (E.coli, Vibrio sp, Burkhoderia thailandensis, and Salmonella newport). In Asticcacaulis excentricus (strain ATCC 15261 / DSM 4724 / KCTC 12464 / NCIMB 9791 / VKM B-1370 / CB 48), this protein is Astexin-2.